The primary structure comprises 132 residues: MSKTLNIIWQYLRAFVLIYACLYAGIFIASLLPVTIPGSIIGMLILFVLLALQILPAKWVNPGCYVLIRYMALLFVPIGVGVMQYFDLLRAQFGPVVVSCAISTLVVFLVMSWSSQLVHGERKVVGQKGSEE.

The next 4 helical transmembrane spans lie at 7-27, 31-51, 63-83, and 93-113; these read IIWQ…AGIF, LLPV…VLLA, GCYV…VGVM, and FGPV…VMSW.

Belongs to the UPF0299 family.

It localises to the cell inner membrane. The protein is UPF0299 membrane protein YohJ of Shigella dysenteriae serotype 1 (strain Sd197).